The following is a 137-amino-acid chain: Nucleoside diphosphate kinase (137 aa).

ATP contacts are provided by K9, F57, R85, T91, R102, and N112. The active-site Pros-phosphohistidine intermediate is H115.

It belongs to the NDK family. As to quaternary structure, homotetramer. It depends on Mg(2+) as a cofactor.

The protein localises to the cytoplasm. The enzyme catalyses a 2'-deoxyribonucleoside 5'-diphosphate + ATP = a 2'-deoxyribonucleoside 5'-triphosphate + ADP. It catalyses the reaction a ribonucleoside 5'-diphosphate + ATP = a ribonucleoside 5'-triphosphate + ADP. Its function is as follows. Major role in the synthesis of nucleoside triphosphates other than ATP. The ATP gamma phosphate is transferred to the NDP beta phosphate via a ping-pong mechanism, using a phosphorylated active-site intermediate. The protein is Nucleoside diphosphate kinase of Campylobacter lari (strain RM2100 / D67 / ATCC BAA-1060).